A 749-amino-acid polypeptide reads, in one-letter code: Dynamin-1-like protein (749 aa).

The residue at position 1 (Met-1) is an N-acetylmethionine. Residues 22–315 (IIQLPQIVVV…LMHHIRDCLP (294 aa)) form the Dynamin-type G domain. The G1 motif stretch occupies residues 32-39 (GTQSSGKS). 32 to 40 (GTQSSGKSS) serves as a coordination point for GTP. The interval 58-60 (VTR) is G2 motif. The interval 74-93 (DKRKTTGEENDPATWKNSRH) is disordered. Residues 159-162 (DLPG) are G3 motif. The interval 228 to 231 (TKLD) is G4 motif. Residues 228–234 (TKLDLMD) and 259–262 (NRSQ) contribute to the GTP site. Residues 258–261 (VNRS) are G5 motif. Residues 357–502 (YCNTIEGTAK…NEMVHNLVAI (146 aa)) are middle domain. The interaction with GSK3B stretch occupies residues 461–698 (NYSTQELLRF…NHVKDTLQSE (238 aa)). Residues 515-582 (ADACGLMNNN…IQESRRETKN (68 aa)) form a b domain region. The tract at residues 536-604 (ELPSAVSRDK…QEPTTGNWRG (69 aa)) is disordered. Ser-542 is subject to Phosphoserine. Residues Lys-545 and Lys-548 each participate in a glycyl lysine isopeptide (Lys-Gly) (interchain with G-Cter in SUMO) cross-link. The span at 550–567 (PSALAPASQEPSPAASAE) shows a compositional bias: low complexity. Phosphoserine is present on Ser-561. Basic and acidic residues predominate over residues 568–581 (ADGKLIQESRRETK). Glycyl lysine isopeptide (Lys-Gly) (interchain with G-Cter in SUMO) cross-links involve residues Lys-571 and Lys-581. Residues Thr-598 and Thr-599 are each glycosylated (O-linked (GlcNAc) threonine). Lys-607 participates in a covalent cross-link: Glycyl lysine isopeptide (Lys-Gly) (interchain with G-Cter in SUMO). N6-acetyllysine; alternate is present on Lys-610. Residue Lys-610 forms a Glycyl lysine isopeptide (Lys-Gly) (interchain with G-Cter in SUMO); alternate linkage. Lys-619 participates in a covalent cross-link: Glycyl lysine isopeptide (Lys-Gly) (interchain with G-Cter in SUMO). Ser-620 is modified (phosphoserine). Lys-621 participates in a covalent cross-link: Glycyl lysine isopeptide (Lys-Gly) (interchain with G-Cter in SUMO). Ser-629 is subject to Phosphoserine; by CDK1 and PINK1. The residue at position 650 (Ser-650) is a Phosphoserine; by CAMK1 and PKA. Position 657 is an S-nitrosocysteine (Cys-657). Positions 657–748 (CEVIERLIKS…IIAEIRETHL (92 aa)) constitute a GED domain. The tract at residues 667 to 681 (YFLIVRKNIQDSVPK) is important for homodimerization.

Belongs to the TRAFAC class dynamin-like GTPase superfamily. Dynamin/Fzo/YdjA family. Homotetramer; dimerizes through the N-terminal GTP-middle region of one molecule binding to the GED domain of another DNM1L molecule. Oligomerizes in a GTP-dependent manner to form membrane-associated tubules with a spiral pattern. Interacts with GSK3B and MARCHF5. Interacts (via the GTPase and B domains) with UBE2I; the interaction promotes sumoylation of DNM1L, mainly in its B domain. Interacts with PPP3CA; the interaction dephosphorylates DNM1L and regulates its transition to mitochondria. Interacts with BCL2L1 isoform BCL-X(L) and CLTA; DNM1L and BCL2L1 isoform BCL-X(L) may form a complex in synaptic vesicles that also contains clathrin and MFF. Interacts with MFF; the interaction is inhinited by C11orf65/MFI. Interacts with FIS1. Interacts with MIEF2 and MIEF1; GTP-dependent, regulates GTP hydrolysis and DNM1L oligomerization. Interacts with PGAM5; this interaction leads to dephosphorylation at Ser-656 and activation of GTPase activity and eventually to mitochondria fragmentation. Interacts with RALBP1; during mitosis, recruits DNM1L to the mitochondrion and mediates its activation by the mitotic kinase cyclin B-CDK1. Post-translationally, phosphorylation/dephosphorylation events on two sites near the GED domain regulate mitochondrial fission. Phosphorylation on Ser-650 by CAMK1 and PKA inhibits the GTPase activity, leading to a defect in mitochondrial fission promoting mitochondrial elongation. Dephosphorylated on this site by PPP3CA which promotes mitochondrial fission. Phosphorylation on Ser-629 by CDK1 and PINK1 activates the GTPase activity and promotes mitochondrial fission. Phosphorylated in a circadian manner at Ser-650. In terms of processing, sumoylated on various lysine residues within the B domain, probably by MUL1. Sumoylation positively regulates mitochondrial fission. Desumoylated by SENP5 during G2/M transition of mitosis. Appears to be linked to its catalytic activity. S-nitrosylation increases DNM1L dimerization, mitochondrial fission and causes neuronal damage. Post-translationally, O-GlcNAcylation augments the level of the GTP-bound active form of DNM1L and induces translocation from the cytoplasm to mitochondria in cardiomyocytes. It also decreases phosphorylation at Ser-650. In terms of processing, ubiquitination by MARCHF5 affects mitochondrial morphology.

It localises to the cytoplasm. It is found in the cytosol. The protein resides in the golgi apparatus. Its subcellular location is the endomembrane system. The protein localises to the mitochondrion outer membrane. It localises to the peroxisome. It is found in the membrane. The protein resides in the clathrin-coated pit. Its subcellular location is the cytoplasmic vesicle. The protein localises to the secretory vesicle. It localises to the synaptic vesicle membrane. The enzyme catalyses GTP + H2O = GDP + phosphate + H(+). Its function is as follows. Functions in mitochondrial and peroxisomal division. Mediates membrane fission through oligomerization into membrane-associated tubular structures that wrap around the scission site to constrict and sever the mitochondrial membrane through a GTP hydrolysis-dependent mechanism. The specific recruitment at scission sites is mediated by membrane receptors like MFF, MIEF1 and MIEF2 for mitochondrial membranes. While the recruitment by the membrane receptors is GTP-dependent, the following hydrolysis of GTP induces the dissociation from the receptors and allows DNM1L filaments to curl into closed rings that are probably sufficient to sever a double membrane. Acts downstream of PINK1 to promote mitochondrial fission in a PRKN-dependent manner. Plays an important role in mitochondrial fission during mitosis. Through its function in mitochondrial division, ensures the survival of at least some types of postmitotic neurons, including Purkinje cells, by suppressing oxidative damage. Required for normal brain development, including that of cerebellum. Facilitates developmentally regulated apoptosis during neural tube formation. Required for a normal rate of cytochrome c release and caspase activation during apoptosis; this requirement may depend upon the cell type and the physiological apoptotic cues. Required for formation of endocytic vesicles. Proposed to regulate synaptic vesicle membrane dynamics through association with BCL2L1 isoform Bcl-X(L) which stimulates its GTPase activity in synaptic vesicles; the function may require its recruitment by MFF to clathrin-containing vesicles. Required for programmed necrosis execution. Rhythmic control of its activity following phosphorylation at Ser-650 is essential for the circadian control of mitochondrial ATP production. This is Dynamin-1-like protein from Bos taurus (Bovine).